The following is a 324-amino-acid chain: O-ureido-L-serine synthase (324 aa).

At Lys-43 the chain carries N6-(pyridoxal phosphate)lysine. Residues Asn-73, 177-181 (GTTGT), and Ser-265 each bind pyridoxal 5'-phosphate.

Belongs to the cysteine synthase/cystathionine beta-synthase family. Homotetramer. It depends on pyridoxal 5'-phosphate as a cofactor.

It carries out the reaction hydroxyurea + O-acetyl-L-serine = O-ureido-L-serine + acetate + H(+). The catalysed reaction is O-acetyl-L-serine + hydrogen sulfide = L-cysteine + acetate. In terms of biological role, involved in the biosynthesis of the antibiotic D-cycloserine (DCS), a cyclic structural analog of D-alanine, used as an antitubercular agent. Catalyzes the addition of hydroxyurea on O-acetyl-L-serine (OAS) to yield O-ureido-L-serine. It prefers sulfide as the second substrate, followed by hydroxyurea, L-homocysteine, and thiosulfate. This Streptomyces lavendulae protein is O-ureido-L-serine synthase.